We begin with the raw amino-acid sequence, 731 residues long: Small conductance calcium-activated potassium channel protein 3 (731 aa).

Residues 1-11 show a composition bias toward basic and acidic residues; that stretch reads MDTSGHFHDSG. Disordered stretches follow at residues 1-170 and 239-258; these read MDTS…SNPF and ATHN…FPKA. Positions 30–40 are enriched in low complexity; sequence QQQQQQQQQQQ. A compositionally biased stretch (pro residues) spans 41-51; it reads QPPPPAPPAAP. A compositionally biased stretch (low complexity) spans 52 to 95; it reads QQPLGPSLQPQPPQLQQQQQQQQQQQQQQPPHPLSQLAQLQSQP. Over residues 112–132 the composition is skewed to polar residues; the sequence is PSSNSTAILHPSSRQGSQLNL. Residues 138–147 show a composition bias toward low complexity; sequence GHSPSSTATS. S167 carries the post-translational modification Phosphoserine. Positions 239–256 are enriched in polar residues; it reads ATHNHQHAGTTASSTTFP. A helical transmembrane segment spans residues 288–308; that stretch reads LIFGMFGIVVMVIETELSWGL. The helical transmembrane segment at 315–335 threads the bilayer; that stretch reads FSLALKCLISLSTIILLGLII. A helical membrane pass occupies residues 366-386; sequence ISLEMLVCAIHPIPGEYKFFW. A helical transmembrane segment spans residues 405 to 425; sequence IILSIPMFLRLYLIARVMLLH. A helical transmembrane segment spans residues 454–474; the sequence is LMTICPGTVLLVFSISLWIIA. The pore-forming intramembrane region spans 494–514; the sequence is FLGAMWLISITFLSIGYGDMV. The chain crosses the membrane as a helical span at residues 523–543; it reads VCLLTGIMGAGCTALVVAVVA. A calmodulin-binding region spans residues 561-637; it reads DTQLTKRIKN…LVDLSKMQNV (77 aa). Residues 642 to 669 are a coiled coil; sequence ITELNDRSEDLEKQIGSLESKLEHLTAS. Residues 709–731 form a disordered region; that stretch reads ISDSPIGVSSTSFPTPYTSSSSC. The span at 717 to 731 shows a compositional bias: low complexity; sequence SSTSFPTPYTSSSSC.

Belongs to the potassium channel KCNN family. KCa2.3/KCNN3 subfamily. Homodimer. Heteromultimer with KCNN2 or KCNN1; this modulates plasma membrane expression and consequently the small conductance calcium-activated potassium channel activity. The complex is composed of 4 channel subunits each of which binds to a calmodulin subunit which regulates the channel activity through calcium-binding. Interacts with CALM1. As to expression, widely distributed in human tissues and is present at 20-60% of KCNN3 in the brain.

Its subcellular location is the cell membrane. The protein resides in the cytoplasm. It is found in the myofibril. It localises to the sarcomere. The protein localises to the z line. The enzyme catalyses K(+)(in) = K(+)(out). Inhibited by bee venom neurotoxin apamin. Small conductance calcium-activated potassium channel that mediates the voltage-independent transmembrane transfer of potassium across the cell membrane through a constitutive interaction with calmodulin which binds the intracellular calcium allowing its opening. The current is characterized by a voltage-independent activation, an intracellular calcium concentration increase-dependent activation and a single-channel conductance of 10 picosiemens. Also presents an inwardly rectifying current, thus reducing its already small outward conductance of potassium ions, which is particularly the case when the membrane potential displays positive values, above + 20 mV. Activation is followed by membrane hyperpolarization. Thought to regulate neuronal excitability by contributing to the slow component of synaptic afterhyperpolarization. Its function is as follows. Does not function as a small conductance calcium-activated potassium channel. Selectively suppresses endogenous KCNN3 currents, in a dominant-negative fashion by decreasing the abundance of functional channels in the plasma membrane, possibly by selectively coassembling with and sequestering native KCNN3 protein in intracellular compartments. This dominant inhibitory effect extends to other members of the SK subfamily. The polypeptide is Small conductance calcium-activated potassium channel protein 3 (Homo sapiens (Human)).